The primary structure comprises 511 residues: NAD(P)H-quinone oxidoreductase subunit 2, chloroplastic (511 aa).

The next 14 membrane-spanning stretches (helical) occupy residues L15–F35, V39–L59, S78–S98, A108–G128, L132–Y152, L167–L187, F210–A230, P244–T264, W278–I298, M306–N326, L334–F354, V377–F397, G410–L430, and L466–I486.

It belongs to the complex I subunit 2 family. As to quaternary structure, NDH is composed of at least 16 different subunits, 5 of which are encoded in the nucleus.

The protein localises to the plastid. It localises to the chloroplast thylakoid membrane. The catalysed reaction is a plastoquinone + NADH + (n+1) H(+)(in) = a plastoquinol + NAD(+) + n H(+)(out). It catalyses the reaction a plastoquinone + NADPH + (n+1) H(+)(in) = a plastoquinol + NADP(+) + n H(+)(out). Functionally, NDH shuttles electrons from NAD(P)H:plastoquinone, via FMN and iron-sulfur (Fe-S) centers, to quinones in the photosynthetic chain and possibly in a chloroplast respiratory chain. The immediate electron acceptor for the enzyme in this species is believed to be plastoquinone. Couples the redox reaction to proton translocation, and thus conserves the redox energy in a proton gradient. The polypeptide is NAD(P)H-quinone oxidoreductase subunit 2, chloroplastic (Chlorokybus atmophyticus (Soil alga)).